The following is a 290-amino-acid chain: MSWLDKLLPPKIKQTDPKSRKGIPEGLWVKCPSCEAVLYRNDVDANLHVCPKCDHHMRIGARERLDGLLDPEGRYEIGQEIVPVDTLKFKDSRKYPDRLKEAMDETGETDAMVVMGGAIHTLPVVAACFEFSFMGGSMGSVVGERFARGAQNALEQHVPFICFTASGGARMQESLLSLMQMAKTTAMLTKLAEAKLPFISVLTDPTMGGVSASFAFLGDVVIAEPKALIGFAGPRVIEQTVREKLPEGFQRAEFLLKTGAIDMIVDRRKMRDEIAQLLALLQRQPADALA.

The region spanning 27–290 (LWVKCPSCEA…LQRQPADALA (264 aa)) is the CoA carboxyltransferase N-terminal domain. 4 residues coordinate Zn(2+): Cys-31, Cys-34, Cys-50, and Cys-53. The C4-type zinc finger occupies 31 to 53 (CPSCEAVLYRNDVDANLHVCPKC).

It belongs to the AccD/PCCB family. As to quaternary structure, acetyl-CoA carboxylase is a heterohexamer composed of biotin carboxyl carrier protein (AccB), biotin carboxylase (AccC) and two subunits each of ACCase subunit alpha (AccA) and ACCase subunit beta (AccD). Requires Zn(2+) as cofactor.

Its subcellular location is the cytoplasm. It catalyses the reaction N(6)-carboxybiotinyl-L-lysyl-[protein] + acetyl-CoA = N(6)-biotinyl-L-lysyl-[protein] + malonyl-CoA. It functions in the pathway lipid metabolism; malonyl-CoA biosynthesis; malonyl-CoA from acetyl-CoA: step 1/1. Functionally, component of the acetyl coenzyme A carboxylase (ACC) complex. Biotin carboxylase (BC) catalyzes the carboxylation of biotin on its carrier protein (BCCP) and then the CO(2) group is transferred by the transcarboxylase to acetyl-CoA to form malonyl-CoA. This chain is Acetyl-coenzyme A carboxylase carboxyl transferase subunit beta, found in Burkholderia cenocepacia (strain ATCC BAA-245 / DSM 16553 / LMG 16656 / NCTC 13227 / J2315 / CF5610) (Burkholderia cepacia (strain J2315)).